The following is a 310-amino-acid chain: Fructose-bisphosphate aldolase/6-deoxy-5-ketofructose 1-phosphate synthase (310 aa).

Substrate is bound by residues aspartate 48–glutamine 49, histidine 53, aspartate 57, and tryptophan 180. Catalysis depends on tyrosine 182, which acts as the Proton donor. Residues arginine 184, lysine 213–asparagine 215, alanine 241–glycine 243, and glycine 270–arginine 271 contribute to the substrate site. The active-site Schiff-base intermediate with dihydroxyacetone-P is lysine 213. The active-site Schiff-base intermediate with substrate is lysine 213.

The protein belongs to the DeoC/FbaB aldolase family.

The enzyme catalyses beta-D-fructose 1,6-bisphosphate = D-glyceraldehyde 3-phosphate + dihydroxyacetone phosphate. It catalyses the reaction beta-D-fructose 1,6-bisphosphate + methylglyoxal = 1-deoxy-D-threo-hexo-2,5-diulose 6-phosphate + D-glyceraldehyde 3-phosphate. The catalysed reaction is beta-D-fructose 1-phosphate + methylglyoxal = 1-deoxy-D-threo-hexo-2,5-diulose 6-phosphate + D-glyceraldehyde. It participates in aromatic compound metabolism. Its function is as follows. Catalyzes the transaldolization of either fructose-1-P or fructose-1,6-bisphosphate with methylglyoxal to produce 6-deoxy-5-ketofructose-1-phosphate (DKFP). Also catalyzes the reversible aldol condensation of dihydroxyacetone phosphate (DHAP or glycerone-phosphate) with glyceraldehyde 3-phosphate (G3P or GAP) to produce fructose 1,6-bisphosphate (FBP). The polypeptide is Fructose-bisphosphate aldolase/6-deoxy-5-ketofructose 1-phosphate synthase (Methanocaldococcus jannaschii (strain ATCC 43067 / DSM 2661 / JAL-1 / JCM 10045 / NBRC 100440) (Methanococcus jannaschii)).